The primary structure comprises 251 residues: Octanoyltransferase (251 aa).

Residues 56–241 enclose the BPL/LPL catalytic domain; it reads ADTGDEIWVV…NLDGASAAAD (186 aa). Residues 96-103, 168-170, and 181-183 each bind substrate; these read RGGQITYH, ALG, and GLS. Cys199 functions as the Acyl-thioester intermediate in the catalytic mechanism.

The protein belongs to the LipB family.

It is found in the cytoplasm. It catalyses the reaction octanoyl-[ACP] + L-lysyl-[protein] = N(6)-octanoyl-L-lysyl-[protein] + holo-[ACP] + H(+). It participates in protein modification; protein lipoylation via endogenous pathway; protein N(6)-(lipoyl)lysine from octanoyl-[acyl-carrier-protein]: step 1/2. Its function is as follows. Catalyzes the transfer of endogenously produced octanoic acid from octanoyl-acyl-carrier-protein onto the lipoyl domains of lipoate-dependent enzymes. Lipoyl-ACP can also act as a substrate although octanoyl-ACP is likely to be the physiological substrate. The protein is Octanoyltransferase of Burkholderia orbicola (strain AU 1054).